The sequence spans 185 residues: Pericyclase pydY (185 aa).

The protein belongs to the pericyclase pydY family.

The protein operates within mycotoxin biosynthesis. In terms of biological role, pericyclase; part of the gene cluster that mediates the biosynthesis of pyrrocidines, fungal natural products containing a macrocyclic para-cyclophane connected to a decahydrofluorene ring system that show potent antibiotic activities toward Gram-negative bacteria. Within the pathway, pydY is involved in the late Diels-Alder cycloaddition step that leads to the formation of the decahydrofluorene core. The pathway begins with the PKS-NRPS pydA which, with the help of the trans-enoyl reductase pydC, synthesizes the polyketide-tyrosyl acyl thioester product which can be reductively off-loaded by the terminal reductase (R) domain in pydA. The alpha/beta hydrolase pydG is then required to catalyze the subsequent Knoevenagel condensation that affords the 3-pyrrolin-2-one ring, whereas the four proteins pydB, pydE, pydX and pydZ then function synergistically to form the cyclophane. PydB and the membrane-bound pydX and pydZ are lipid-binding proteins that can sequester and mold the pdyG product into the inverse S-shape. Binding of the medium chain reductase pydE to the complex would trigger the cascade oxidative cyclization. PydY is involved in the Diels-Alder cycloaddition that forms the decahydrofluorene core. Additional non-enzymatic hydroxylation yields pyrrocidine A2 which can be further reduced into pyrrocidine B by an endogenous reductase. The sequence is that of Pericyclase pydY from Acremonium sp.